Reading from the N-terminus, the 332-residue chain is 2,3-diketo-L-gulonate reductase (332 aa).

The active-site Proton donor is His44. Residues 168–174, 224–225, and 304–306 contribute to the NAD(+) site; these read ITMVDMS, WK, and GHE.

This sequence belongs to the LDH2/MDH2 oxidoreductase family. DlgD subfamily. In terms of assembly, homodimer.

It is found in the cytoplasm. It catalyses the reaction 3-dehydro-L-gulonate + NAD(+) = 2,3-dioxo-L-gulonate + NADH + H(+). The enzyme catalyses 3-dehydro-L-gulonate + NADP(+) = 2,3-dioxo-L-gulonate + NADPH + H(+). In terms of biological role, catalyzes the reduction of 2,3-diketo-L-gulonate in the presence of NADH, to form 3-keto-L-gulonate. In Escherichia coli (strain SMS-3-5 / SECEC), this protein is 2,3-diketo-L-gulonate reductase.